A 387-amino-acid chain; its full sequence is Phosphoglycerate kinase (387 aa).

Substrate contacts are provided by residues 21 to 23, Arg36, 59 to 62, Arg113, and Arg146; these read DLN and HLGR. ATP is bound by residues Lys197, Glu314, and 340–343; that span reads GGDT.

It belongs to the phosphoglycerate kinase family. Monomer.

The protein resides in the cytoplasm. It carries out the reaction (2R)-3-phosphoglycerate + ATP = (2R)-3-phospho-glyceroyl phosphate + ADP. It functions in the pathway carbohydrate degradation; glycolysis; pyruvate from D-glyceraldehyde 3-phosphate: step 2/5. The protein is Phosphoglycerate kinase of Cronobacter sakazakii (strain ATCC BAA-894) (Enterobacter sakazakii).